The chain runs to 218 residues: Ribose-5-phosphate isomerase A (218 aa).

Substrate is bound by residues 28 to 31 (TGST), 81 to 84 (DGAD), and 94 to 97 (KGGG). Glutamate 103 (proton acceptor) is an active-site residue. Substrate is bound at residue lysine 121.

It belongs to the ribose 5-phosphate isomerase family. In terms of assembly, homodimer.

It carries out the reaction aldehydo-D-ribose 5-phosphate = D-ribulose 5-phosphate. It participates in carbohydrate degradation; pentose phosphate pathway; D-ribose 5-phosphate from D-ribulose 5-phosphate (non-oxidative stage): step 1/1. In terms of biological role, catalyzes the reversible conversion of ribose-5-phosphate to ribulose 5-phosphate. The protein is Ribose-5-phosphate isomerase A of Pseudoalteromonas atlantica (strain T6c / ATCC BAA-1087).